Reading from the N-terminus, the 761-residue chain is MSSLISRLRKLFKSRNTHDFSNLCKENYQTLLSSEEGKILLGIYHFLSGEPQKAEELLSQVSENSLNSAQGLSDLGLLYFFLGRVEDAERVLKKALKFSDVDDALYARLGALYYSQGKLEEAQHYWERALSLNPNKVEILYNLGVLHLNKGELEKALDLFERALRLKPDFREAEEKKTLILLSLNRIDELVEEYYRELEKNPNEEVYIKLGNTLYTAGRLAEARAVFQEGAEKFPHDPRLKLGLIEVLKEEGRTYQAGTLLKEWLEDTSWVDEEKTPNKDEFLMQMRFRLNELRIQASFLDTAEKDLEKVENKEDYPEYYILKSKILMERNKGLEAADLLREAKERFPAHLGVLQELVHVLTSIGELEEAKEIQSQIVAINPSAVIQQVEMEDYKATDEQIQVLETLLNSPAVPKQTRASAGFVLHKVLEKRKDYDKAFEVLIKANELVKEEINYDWREHRFMIQRTIEVFTPEVVERLKGRGHPSKRPIFVLGMPRSGTTLTEQILGSHSMVYPAGELPFVPKIVNLIPKALQYVGKEPKEWPEAILEFDERLLKSAAQYYLDRVAKLDSEHPRIVDKLPHNFDYVGLILLMFPNAKVIHLKRNDLDVAVSNYQQNFAAKHGTMGFAFDLRWIGHMLNDHRAIMEHWHKLFPGQIYELDYQRLTEEPEEVIRELLEFCELPWEDRVLEYYKTKRPVKTASIKQVRKGIYRSSVEKWRRYEKYLTPVIEILQEGFKKLEDPEIEKYQDKVIPKGLVGYTVG.

TPR repeat units lie at residues 35–68, 69–102, 103–136, 137–170, 172–203, 204–237, 351–384, and 419–452; these read EEGK…SLNS, AQGL…SDVD, DALY…NPNK, VEIL…KPDF, EAEE…KNPN, EEVY…FPHD, LGVL…NPSA, and ASAG…VKEE. Residues 487–761 form a protein sulfotransferase-like region; that stretch reads KRPIFVLGMP…PKGLVGYTVG (275 aa).

It in the C-terminal section; belongs to the protein sulfotransferase family.

This is an uncharacterized protein from Aquifex aeolicus (strain VF5).